The primary structure comprises 113 residues: Large ribosomal subunit protein bL19 (113 aa).

This sequence belongs to the bacterial ribosomal protein bL19 family.

Its function is as follows. This protein is located at the 30S-50S ribosomal subunit interface and may play a role in the structure and function of the aminoacyl-tRNA binding site. The sequence is that of Large ribosomal subunit protein bL19 from Natranaerobius thermophilus (strain ATCC BAA-1301 / DSM 18059 / JW/NM-WN-LF).